A 499-amino-acid polypeptide reads, in one-letter code: Centrosomal protein of 57 kDa (499 aa).

The span at 1–35 (MAAASVSETSASQFSNILAEPSKSNGSMVRHSSSP) shows a compositional bias: polar residues. A disordered region spans residues 1–58 (MAAASVSETSASQFSNILAEPSKSNGSMVRHSSSPYVVYPPDKPFLNSDLRRSPNKPT). Residue serine 53 is modified to Phosphoserine. The interval 58–239 (TFAYPESNSR…KAAQLQTGLE (182 aa)) is centrosome localization domain (CLD). The stretch at 63 to 241 (ESNSRAIFSA…AQLQTGLEVN (179 aa)) forms a coiled coil. The interval 277–490 (AVQPHYRLCL…KDMQSIQNSL (214 aa)) is mediates interaction with microtubules. 2 disordered regions span residues 334 to 357 (KQVS…SVNE) and 431 to 476 (KQKK…SRKN). Residues 346 to 357 (SATPPSSSSVNE) show a composition bias toward low complexity. A coiled-coil region spans residues 389-450 (TVELKDNLEC…KTLDEEGNSS (62 aa)). Over residues 431 to 444 (KQKKELKATRKTLD) the composition is skewed to basic and acidic residues. The span at 449–459 (SSSRSTTTGTT) shows a compositional bias: low complexity. Basic and acidic residues predominate over residues 460 to 474 (NKKDFAKPRPGEKSR).

This sequence belongs to the translokin family. In terms of assembly, homodimer and homooligomer. Interacts with FGF2 and RAP80. Does not interact with FGF1 or FGF2 isoform 24 kDa. Interacts with microtubules.

The protein resides in the nucleus. The protein localises to the cytoplasm. Its subcellular location is the cytoskeleton. It is found in the microtubule organizing center. It localises to the centrosome. In terms of biological role, centrosomal protein which may be required for microtubule attachment to centrosomes. May act by forming ring-like structures around microtubules. Mediates nuclear translocation and mitogenic activity of the internalized growth factor FGF2. This chain is Centrosomal protein of 57 kDa (CEP57), found in Bos taurus (Bovine).